The primary structure comprises 130 residues: MKNKFSIKVKFPEGILGFEDIKEFIIKDSAHKPFSIMQSINGEINFLVTSPFNFLEKYLPNIENKDWLDIQAENENEKVILCIINMHVKNYKEITANLKAPIILNKKKLIGKQAISTNEEHYLRYRVFKE.

This sequence belongs to the FliW family. As to quaternary structure, interacts with translational regulator CsrA and flagellin(s).

The protein localises to the cytoplasm. Acts as an anti-CsrA protein, binds CsrA and prevents it from repressing translation of its target genes, one of which is flagellin. Binds to flagellin and participates in the assembly of the flagellum. This chain is Flagellar assembly factor FliW, found in Borrelia duttonii (strain Ly).